We begin with the raw amino-acid sequence, 150 residues long: 3-hydroxyacyl-[acyl-carrier-protein] dehydratase FabZ (150 aa).

His-51 is a catalytic residue.

This sequence belongs to the thioester dehydratase family. FabZ subfamily.

The protein localises to the cytoplasm. It catalyses the reaction a (3R)-hydroxyacyl-[ACP] = a (2E)-enoyl-[ACP] + H2O. Functionally, involved in unsaturated fatty acids biosynthesis. Catalyzes the dehydration of short chain beta-hydroxyacyl-ACPs and long chain saturated and unsaturated beta-hydroxyacyl-ACPs. The protein is 3-hydroxyacyl-[acyl-carrier-protein] dehydratase FabZ of Legionella pneumophila (strain Paris).